We begin with the raw amino-acid sequence, 352 residues long: MQVGVFIPIGNNGWLISETSPQYMPSFELNKEITQKAETYGFDFALSMIKLRGFGGKTQFWEHNLESFTLMAGLAAVTSKIKIFATVATLTIPPAIVARMASTIDSIAPGRFGVNLVTGWQKAEYSQMGLWPGEAHYTDRYNYLAEYTTVLKDLLETGVSDFKGKYFTMDDCRVSPHPKETKLICAGSSDEGLAFTAQYADYSFALGKGTNTPTAFASVNKRLEAAAEKTGRDVQSFILFMIIADETDEKAMAKWQSYRDGADQEALAWLTQQAAPNAKAGATTNTQQLAAPESAVNLNMGTLVGSYESIAKMLDEIAAVPGTAGVLLVFDDFLRGVEDFGTRIQPLMKSRT.

Residues 49–50 (IK), asparagine 115, glutamate 124, 140–141 (RY), and serine 189 each bind FMN.

This sequence belongs to the NtaA/SnaA/DszA monooxygenase family. RutA subfamily.

It catalyses the reaction uracil + FMNH2 + NADH + O2 = (Z)-3-ureidoacrylate + FMN + NAD(+) + H2O + H(+). It carries out the reaction thymine + FMNH2 + NADH + O2 = (Z)-2-methylureidoacrylate + FMN + NAD(+) + H2O + H(+). In terms of biological role, catalyzes the pyrimidine ring opening between N-3 and C-4 by an unusual flavin hydroperoxide-catalyzed mechanism, adding oxygen atoms in the process to yield ureidoacrylate peracid, that immediately reacts with FMN forming ureidoacrylate and FMN-N(5)-oxide. The FMN-N(5)-oxide reacts spontaneously with NADH to produce FMN. Requires the flavin reductase RutF to regenerate FMN in vivo. This Caulobacter segnis (strain ATCC 21756 / DSM 7131 / JCM 7823 / NBRC 15250 / LMG 17158 / TK0059) (Mycoplana segnis) protein is Pyrimidine monooxygenase RutA.